Reading from the N-terminus, the 526-residue chain is Rho guanine nucleotide exchange factor 3 (526 aa).

The disordered stretch occupies residues 20-40 (ELPPASGPAKDAEEPSNKRVK). Phosphoserine is present on residues S47 and S70. The DH domain occupies 122 to 304 (KRQEAIFELS…QGIVAEINTK (183 aa)). The region spanning 291 to 449 (INIIQGIVAE…WLNCIRQAKE (159 aa)) is the PH domain. A disordered region spans residues 464 to 526 (EGSFLNPTTG…GNSRHGESNV (63 aa)). Residues 466–475 (SFLNPTTGSR) show a composition bias toward polar residues.

In terms of assembly, interacts with RHOA and RHOB. In terms of tissue distribution, widely expressed. Highest levels are found in adult brain and skeletal muscle. Lower levels are found in heart and kidney.

The protein localises to the cytoplasm. Acts as a guanine nucleotide exchange factor (GEF) for RhoA and RhoB GTPases. This is Rho guanine nucleotide exchange factor 3 (ARHGEF3) from Homo sapiens (Human).